The sequence spans 279 residues: Release factor glutamine methyltransferase (279 aa).

S-adenosyl-L-methionine contacts are provided by residues Gly-118 to Gly-122, Asp-141, and Asn-182. Asn-182–Tyr-185 serves as a coordination point for substrate.

The protein belongs to the protein N5-glutamine methyltransferase family. PrmC subfamily.

It catalyses the reaction L-glutaminyl-[peptide chain release factor] + S-adenosyl-L-methionine = N(5)-methyl-L-glutaminyl-[peptide chain release factor] + S-adenosyl-L-homocysteine + H(+). Methylates the class 1 translation termination release factors RF1/PrfA and RF2/PrfB on the glutamine residue of the universally conserved GGQ motif. The sequence is that of Release factor glutamine methyltransferase from Streptococcus pneumoniae (strain ATCC BAA-255 / R6).